The primary structure comprises 518 residues: Branchpoint-bridging protein (518 aa).

Disordered regions lie at residues 1–47 (MSAY…KIGK), 94–124 (PSGNIANNPNYEREPSPPPKYDAAGNRSNTR), 202–241 (AIRGKGSVKDGKSTSSNNDDDDSNSSLSFSNPNLNSSGND), and 295–314 (RETKPYNPETQQSRRSRPGL). A compositionally biased stretch (basic and acidic residues) spans 19-31 (VRGRSEKKVEASH). The KH domain occupies 167 to 233 (YIPVKDYPDI…SNSSLSFSNP (67 aa)). Residues 225–240 (NSSLSFSNPNLNSSGN) show a composition bias toward low complexity. A CCHC-type zinc finger spans residues 319-336 (LVCKSCGKVGHFARDCKF). The tract at residues 337 to 518 (RGTSDGNNNP…TKNPPPPPPA (182 aa)) is disordered. Residues 340–361 (SDGNNNPIVQDQADSYQQTAPY) show a composition bias toward polar residues. Basic and acidic residues predominate over residues 363–381 (DSRRQREEEDPRNNGREEI). A compositionally biased stretch (pro residues) spans 408 to 518 (DAPPPPVGLA…TKNPPPPPPA (111 aa)).

This sequence belongs to the BBP/SF1 family.

It localises to the nucleus. Its function is as follows. Necessary for the splicing of pre-mRNA. Has a role in the recognition of the branch site (5'-UACUAAC-3'), the pyrimidine tract and the 3'-splice site at the 3'-end of introns. The sequence is that of Branchpoint-bridging protein (BBP) from Debaryomyces hansenii (strain ATCC 36239 / CBS 767 / BCRC 21394 / JCM 1990 / NBRC 0083 / IGC 2968) (Yeast).